A 245-amino-acid polypeptide reads, in one-letter code: Putative [LysW]-aminoadipate/[LysW]-glutamate kinase (245 aa).

2 residues coordinate substrate: Arg-60 and Asn-162.

It belongs to the acetylglutamate kinase family. LysZ subfamily.

The protein localises to the cytoplasm. It carries out the reaction [amino-group carrier protein]-C-terminal-N-(1,4-dicarboxybutan-1-yl)-L-glutamine + ATP = [amino-group carrier protein]-C-terminal-N-(1-carboxy-5-phosphooxy-5-oxopentan-1-yl)-L-glutamine + ADP. It catalyses the reaction [amino-group carrier protein]-C-terminal-gamma-(L-glutamyl)-L-glutamate + ATP = [amino-group carrier protein]-C-terminal-gamma-(5-phospho-L-glutamyl)-L-glutamate + ADP. Its pathway is amino-acid biosynthesis; L-lysine biosynthesis via AAA pathway; L-lysine from L-alpha-aminoadipate (Thermus route): step 2/5. It participates in amino-acid biosynthesis; L-arginine biosynthesis. Its function is as follows. Involved in both the arginine and lysine biosynthetic pathways. Phosphorylates the LysW-bound precursors glutamate (for arginine biosynthesis), respectively alpha-aminoadipate (for lysine biosynthesis). This chain is Putative [LysW]-aminoadipate/[LysW]-glutamate kinase, found in Pyrococcus abyssi (strain GE5 / Orsay).